The chain runs to 862 residues: Eukaryotic translation initiation factor 3 subunit C (862 aa).

Residues 1 to 10 are compositionally biased toward gly residues; the sequence is MSRFFYGGGS. Residues 1-81 form a disordered region; sequence MSRFFYGGGS…DEEKTTVVKS (81 aa). The segment covering 16 to 52 has biased composition (acidic residues); the sequence is SSDEEELYERDEEEQSEEEESSEEEETSEEGSDDEEG. The PCI domain occupies 601 to 775; sequence FHMHINLELL…GAIVFRKGVE (175 aa). Residues 814–862 form a disordered region; that stretch reads RDQGAGARGGRGGGRGGHARGGARFPGQQGRRPGGQQFGGGALGGAIKA. Positions 819-833 are enriched in gly residues; sequence GARGGRGGGRGGHAR. Low complexity predominate over residues 835 to 844; it reads GARFPGQQGR. Residues 845-862 show a composition bias toward gly residues; it reads RPGGQQFGGGALGGAIKA.

Belongs to the eIF-3 subunit C family. Component of the eukaryotic translation initiation factor 3 (eIF-3) complex.

Its subcellular location is the cytoplasm. In terms of biological role, component of the eukaryotic translation initiation factor 3 (eIF-3) complex, which is involved in protein synthesis of a specialized repertoire of mRNAs and, together with other initiation factors, stimulates binding of mRNA and methionyl-tRNAi to the 40S ribosome. The eIF-3 complex specifically targets and initiates translation of a subset of mRNAs involved in cell proliferation. The sequence is that of Eukaryotic translation initiation factor 3 subunit C (nip1) from Aspergillus clavatus (strain ATCC 1007 / CBS 513.65 / DSM 816 / NCTC 3887 / NRRL 1 / QM 1276 / 107).